The chain runs to 185 residues: Threonylcarbamoyl-AMP synthase (185 aa).

Residues 4–185 (SWRVQQAAQD…IATAQIVRAG (182 aa)) form the YrdC-like domain.

This sequence belongs to the SUA5 family. TsaC subfamily.

The protein resides in the cytoplasm. The enzyme catalyses L-threonine + hydrogencarbonate + ATP = L-threonylcarbamoyladenylate + diphosphate + H2O. Functionally, required for the formation of a threonylcarbamoyl group on adenosine at position 37 (t(6)A37) in tRNAs that read codons beginning with adenine. Catalyzes the conversion of L-threonine, HCO(3)(-)/CO(2) and ATP to give threonylcarbamoyl-AMP (TC-AMP) as the acyladenylate intermediate, with the release of diphosphate. This is Threonylcarbamoyl-AMP synthase from Pseudomonas syringae pv. syringae (strain B728a).